A 242-amino-acid polypeptide reads, in one-letter code: tRNA pseudouridine synthase A (242 aa).

The active-site Nucleophile is D51. Y107 provides a ligand contact to substrate.

The protein belongs to the tRNA pseudouridine synthase TruA family. In terms of assembly, homodimer.

It carries out the reaction uridine(38/39/40) in tRNA = pseudouridine(38/39/40) in tRNA. Functionally, formation of pseudouridine at positions 38, 39 and 40 in the anticodon stem and loop of transfer RNAs. This is tRNA pseudouridine synthase A from Helicobacter pylori (strain J99 / ATCC 700824) (Campylobacter pylori J99).